Reading from the N-terminus, the 239-residue chain is DNA damage-regulated autophagy modulator protein 1 (239 aa).

The next 6 helical transmembrane spans lie at 15–35 (ILVIWSSAGFLFSYIISVLIG), 54–74 (SGVFGFMISVSAMLGAATMYT), 91–111 (IYFNKISLAIGLFGCIGMGIV), 119–139 (VPAVHDAGALITFICGVMYIL), 162–182 (MTVSLIAFIAVVPMSVFSILS), and 201–221 (TSAICEWTVAFGFNMYFLTFI).

Belongs to the DRAM/TMEM150 family.

The protein localises to the lysosome membrane. Its function is as follows. Lysosomal modulator of autophagy that plays a central role in p53/TP53-mediated apoptosis. In Xenopus laevis (African clawed frog), this protein is DNA damage-regulated autophagy modulator protein 1 (dram1).